The primary structure comprises 143 residues: Large ribosomal subunit protein uL16 (143 aa).

It belongs to the universal ribosomal protein uL16 family. As to quaternary structure, part of the 50S ribosomal subunit.

Its function is as follows. Binds 23S rRNA and is also seen to make contacts with the A and possibly P site tRNAs. In Sphingopyxis alaskensis (strain DSM 13593 / LMG 18877 / RB2256) (Sphingomonas alaskensis), this protein is Large ribosomal subunit protein uL16.